Here is a 33-residue protein sequence, read N- to C-terminus: Brevinin-2DYa (33 aa).

Residues C27 and C33 are joined by a disulfide bond.

As to expression, expressed by the skin glands.

The protein resides in the secreted. Antimicrobial peptide. The chain is Brevinin-2DYa from Rana dybowskii (Dybovsky's frog).